Reading from the N-terminus, the 484-residue chain is uncharacterized protein (484 aa).

One can recognise an N-acetyltransferase domain in the interval 334–484 (IIIRQITDND…ENEWIYEVNL (151 aa)).

This is an uncharacterized protein from Methanocaldococcus jannaschii (strain ATCC 43067 / DSM 2661 / JAL-1 / JCM 10045 / NBRC 100440) (Methanococcus jannaschii).